The sequence spans 421 residues: Serine--tRNA ligase (421 aa).

232–234 provides a ligand contact to L-serine; that stretch reads TAE. 262–264 lines the ATP pocket; that stretch reads RSE. Glutamate 285 is an L-serine binding site. 349–352 provides a ligand contact to ATP; sequence EVSS. Serine 384 serves as a coordination point for L-serine.

The protein belongs to the class-II aminoacyl-tRNA synthetase family. Type-1 seryl-tRNA synthetase subfamily. In terms of assembly, homodimer. The tRNA molecule binds across the dimer.

Its subcellular location is the cytoplasm. The catalysed reaction is tRNA(Ser) + L-serine + ATP = L-seryl-tRNA(Ser) + AMP + diphosphate + H(+). The enzyme catalyses tRNA(Sec) + L-serine + ATP = L-seryl-tRNA(Sec) + AMP + diphosphate + H(+). Its pathway is aminoacyl-tRNA biosynthesis; selenocysteinyl-tRNA(Sec) biosynthesis; L-seryl-tRNA(Sec) from L-serine and tRNA(Sec): step 1/1. In terms of biological role, catalyzes the attachment of serine to tRNA(Ser). Is also able to aminoacylate tRNA(Sec) with serine, to form the misacylated tRNA L-seryl-tRNA(Sec), which will be further converted into selenocysteinyl-tRNA(Sec). The protein is Serine--tRNA ligase of Mycoplasma mobile (strain ATCC 43663 / 163K / NCTC 11711) (Mesomycoplasma mobile).